Consider the following 495-residue polypeptide: SH2 domain-containing adapter protein E (495 aa).

3 disordered regions span residues 51–190 (TVSE…DKGK), 203–233 (DYAD…EPYD), and 256–327 (LLDS…EYEQ). Position 107 is a phosphoserine (Ser107). The segment covering 135-144 (TKSSGCSTYI) has biased composition (polar residues). The segment covering 148–157 (IKVDTQEKNG) has biased composition (basic and acidic residues). The segment covering 162–181 (PSSSSSSSSSSSSASSSPSS) has biased composition (low complexity). 2 stretches are compositionally biased toward basic and acidic residues: residues 208 to 224 (YDAK…RVGE) and 301 to 327 (PRAE…EYEQ). The SH2 domain occupies 395–490 (WYHGAISRAE…AEHMTLLYPV (96 aa)).

The polypeptide is SH2 domain-containing adapter protein E (SHE) (Homo sapiens (Human)).